The primary structure comprises 325 residues: tRNA dimethylallyltransferase (325 aa).

25 to 32 (GNTGSGKS) is a binding site for ATP. 27–32 (TGSGKS) provides a ligand contact to substrate. An interaction with substrate tRNA region spans residues 50-53 (DSRQ).

It belongs to the IPP transferase family. Monomer. Mg(2+) serves as cofactor.

It catalyses the reaction adenosine(37) in tRNA + dimethylallyl diphosphate = N(6)-dimethylallyladenosine(37) in tRNA + diphosphate. Its function is as follows. Catalyzes the transfer of a dimethylallyl group onto the adenine at position 37 in tRNAs that read codons beginning with uridine, leading to the formation of N6-(dimethylallyl)adenosine (i(6)A). The polypeptide is tRNA dimethylallyltransferase (Dehalococcoides mccartyi (strain ATCC BAA-2266 / KCTC 15142 / 195) (Dehalococcoides ethenogenes (strain 195))).